We begin with the raw amino-acid sequence, 434 residues long: Adenylosuccinate synthetase (434 aa).

GTP is bound by residues 22–28 and 50–52; these read GDEGKGK and GHT. Asp23 functions as the Proton acceptor in the catalytic mechanism. Positions 23 and 50 each coordinate Mg(2+). IMP-binding positions include 23–26, 48–51, Thr139, Arg153, Gln234, Thr249, and Arg313; these read DEGK and NAGH. His51 functions as the Proton donor in the catalytic mechanism. 309 to 315 is a substrate binding site; it reads ATTGRKR. GTP-binding positions include Arg315, 341–343, and 423–425; these read KLD and SVG.

This sequence belongs to the adenylosuccinate synthetase family. Homodimer. It depends on Mg(2+) as a cofactor.

It is found in the cytoplasm. The catalysed reaction is IMP + L-aspartate + GTP = N(6)-(1,2-dicarboxyethyl)-AMP + GDP + phosphate + 2 H(+). It functions in the pathway purine metabolism; AMP biosynthesis via de novo pathway; AMP from IMP: step 1/2. Plays an important role in the de novo pathway of purine nucleotide biosynthesis. Catalyzes the first committed step in the biosynthesis of AMP from IMP. The sequence is that of Adenylosuccinate synthetase from Chlorobium phaeovibrioides (strain DSM 265 / 1930) (Prosthecochloris vibrioformis (strain DSM 265)).